Consider the following 154-residue polypeptide: MSKKFVITWDNMQHYCRELAQRQMPAEQWKGILGVSRGGLVPAAILARELGIRYVDTVCISSYDHDHQRDMTVLKAPEHDGEGFLIIDDLVDSGDTARKIREMYPKAKFVTVCAKPAGKDLVDEYVVDIPQDTWIEQPWDMVLSYVEPVNRKQK.

5-phospho-alpha-D-ribose 1-diphosphate is bound by residues 37-38 (RG), Arg69, and 88-96 (DDLVDSGDT). Arg69 serves as a coordination point for GMP. Asp89 lines the Mg(2+) pocket. 2 residues coordinate guanine: Asp92 and Ile135. Xanthine contacts are provided by Asp92 and Ile135. GMP is bound by residues 92–96 (DSGDT) and 134–135 (WI).

The protein belongs to the purine/pyrimidine phosphoribosyltransferase family. XGPT subfamily. As to quaternary structure, homotetramer. Requires Mg(2+) as cofactor.

Its subcellular location is the cell inner membrane. The enzyme catalyses GMP + diphosphate = guanine + 5-phospho-alpha-D-ribose 1-diphosphate. It catalyses the reaction XMP + diphosphate = xanthine + 5-phospho-alpha-D-ribose 1-diphosphate. It carries out the reaction IMP + diphosphate = hypoxanthine + 5-phospho-alpha-D-ribose 1-diphosphate. The protein operates within purine metabolism; GMP biosynthesis via salvage pathway; GMP from guanine: step 1/1. Its pathway is purine metabolism; XMP biosynthesis via salvage pathway; XMP from xanthine: step 1/1. Its function is as follows. Purine salvage pathway enzyme that catalyzes the transfer of the ribosyl-5-phosphate group from 5-phospho-alpha-D-ribose 1-diphosphate (PRPP) to the N9 position of the 6-oxopurines guanine and xanthine to form the corresponding ribonucleotides GMP (guanosine 5'-monophosphate) and XMP (xanthosine 5'-monophosphate), with the release of PPi. To a lesser extent, also acts on hypoxanthine. In Vibrio cholerae serotype O1 (strain ATCC 39541 / Classical Ogawa 395 / O395), this protein is Xanthine-guanine phosphoribosyltransferase.